Reading from the N-terminus, the 528-residue chain is Probable rhamnogalacturonate lyase A (528 aa).

An N-terminal signal peptide occupies residues 1 to 20 (MLSKATLLLSLPFWARVANA). An N-linked (GlcNAc...) asparagine glycan is attached at N46. 2 disulfide bridges follow: C50–C93 and C184–C193. A glycan (N-linked (GlcNAc...) asparagine) is linked at N351.

The protein belongs to the polysaccharide lyase 4 family.

It localises to the secreted. The catalysed reaction is Endotype eliminative cleavage of L-alpha-rhamnopyranosyl-(1-&gt;4)-alpha-D-galactopyranosyluronic acid bonds of rhamnogalacturonan I domains in ramified hairy regions of pectin leaving L-rhamnopyranose at the reducing end and 4-deoxy-4,5-unsaturated D-galactopyranosyluronic acid at the non-reducing end.. Functionally, pectinolytic enzymes consist of four classes of enzymes: pectin lyase, polygalacturonase, pectin methylesterase and rhamnogalacturonase. Degrades the rhamnogalacturonan I (RG-I) backbone of pectin. The protein is Probable rhamnogalacturonate lyase A (rglA) of Neosartorya fischeri (strain ATCC 1020 / DSM 3700 / CBS 544.65 / FGSC A1164 / JCM 1740 / NRRL 181 / WB 181) (Aspergillus fischerianus).